Reading from the N-terminus, the 176-residue chain is Isopentenyl-diphosphate Delta-isomerase (176 aa).

Mn(2+) is bound by residues histidine 24 and histidine 30. In terms of domain architecture, Nudix hydrolase spans 28 to 160 (LLHRAFSIFV…PSAFTVWFHC (133 aa)). Cysteine 65 is an active-site residue. A Mn(2+)-binding site is contributed by histidine 67. Glutamate 85 lines the Mg(2+) pocket. Mn(2+)-binding residues include glutamate 110 and glutamate 112. Glutamate 112 is a catalytic residue.

The protein belongs to the IPP isomerase type 1 family. Mg(2+) serves as cofactor. Requires Mn(2+) as cofactor.

Its subcellular location is the cytoplasm. It carries out the reaction isopentenyl diphosphate = dimethylallyl diphosphate. The protein operates within isoprenoid biosynthesis; dimethylallyl diphosphate biosynthesis; dimethylallyl diphosphate from isopentenyl diphosphate: step 1/1. In terms of biological role, catalyzes the 1,3-allylic rearrangement of the homoallylic substrate isopentenyl (IPP) to its highly electrophilic allylic isomer, dimethylallyl diphosphate (DMAPP). The protein is Isopentenyl-diphosphate Delta-isomerase of Burkholderia multivorans (strain ATCC 17616 / 249).